The primary structure comprises 182 residues: UPF0301 protein CHU_1773 (182 aa).

This sequence belongs to the UPF0301 (AlgH) family.

This is UPF0301 protein CHU_1773 from Cytophaga hutchinsonii (strain ATCC 33406 / DSM 1761 / CIP 103989 / NBRC 15051 / NCIMB 9469 / D465).